The primary structure comprises 210 residues: Large ribosomal subunit protein uL3 (210 aa).

The interval 122–155 is disordered; it reads NQKRNNFGRGPMSHGSKNHRAPGSIGAGTTPGRV.

Belongs to the universal ribosomal protein uL3 family. Part of the 50S ribosomal subunit. Forms a cluster with proteins L14 and L19.

One of the primary rRNA binding proteins, it binds directly near the 3'-end of the 23S rRNA, where it nucleates assembly of the 50S subunit. The chain is Large ribosomal subunit protein uL3 from Nostoc punctiforme (strain ATCC 29133 / PCC 73102).